The primary structure comprises 178 residues: Bryoporin (178 aa).

5 residues coordinate phosphocholine: S51, V83, S102, P104, and Y134. The segment at 101-117 (WSVPFDYNLYSNWWNIA) is trp-rich region.

Belongs to the actinoporin family. Plant subfamily.

With respect to regulation, inhibited by sphingomyelin. In terms of biological role, actinoporin-related protein having hemolytic activity in vitro. Binds probably a phosphocholine derivative with the unique amido or hydroxyl groups found in sphingomyelin. Involved in drought tolerance. The protein is Bryoporin of Physcomitrium patens (Spreading-leaved earth moss).